The chain runs to 175 residues: Austinoid biosynthesis cluster protein F (175 aa).

It belongs to the trt14 isomerase family. As to quaternary structure, homodimer.

The protein operates within secondary metabolite biosynthesis; terpenoid biosynthesis. In terms of biological role, part of the gene cluster that mediates the biosynthesis of calidodehydroaustin, a fungal meroterpenoid. The first step of the pathway is the synthesis of 3,5-dimethylorsellinic acid by the polyketide synthase ausA. 3,5-dimethylorsellinic acid is then prenylated by the polyprenyl transferase ausN. Further epoxidation by the FAD-dependent monooxygenase ausM and cyclization by the probable terpene cyclase ausL lead to the formation of protoaustinoid A. Protoaustinoid A is then oxidized to spiro-lactone preaustinoid A3 by the combined action of the FAD-binding monooxygenases ausB and ausC, and the dioxygenase ausE. Acid-catalyzed keto-rearrangement and ring contraction of the tetraketide portion of preaustinoid A3 by ausJ lead to the formation of preaustinoid A4. The aldo-keto reductase ausK, with the help of ausH, is involved in the next step by transforming preaustinoid A4 into isoaustinone which is in turn hydroxylated by the P450 monooxygenase ausI to form austinolide. The cytochrome P450 monooxygenase ausG modifies austinolide to austinol. Austinol is further acetylated to austin by the O-acetyltransferase ausP, which spontaneously changes to dehydroaustin. The cytochrome P450 monooxygenase ausR then converts dehydroaustin is into 7-dehydrodehydroaustin. The hydroxylation catalyzed by ausR permits the O-acetyltransferase ausQ to add an additional acetyl group to the molecule, leading to the formation of acetoxydehydroaustin. The short chain dehydrogenase ausT catalyzes the reduction of the double bond present between carbon atoms 1 and 2 to convert 7-dehydrodehydroaustin into 1,2-dihydro-7-hydroxydehydroaustin. AusQ catalyzes not only an acetylation reaction but also the addition of the PKS ausV diketide product to 1,2-dihydro-7-hydroxydehydroaustin, forming precalidodehydroaustin. Finally, the iron/alpha-ketoglutarate-dependent dioxygenase converts precalidodehydroaustin into calidodehydroaustin. The protein is Austinoid biosynthesis cluster protein F of Aspergillus calidoustus.